An 88-amino-acid polypeptide reads, in one-letter code: EGSGGSGSSGNFTTASNIHMSSVTNTSIAGTGGTGTGTGTGTGTGTGTGTGTGTGTGTGTGNGSASSNYRGGGVAIQPVTLTESLLNK.

A disordered region spans residues 23-88 (VTNTSIAGTG…VTLTESLLNK (66 aa)). 16 repeat units span residues 30-31 (GT), 33-34 (GT), 35-36 (GT), 37-38 (GT), 39-40 (GT), 41-42 (GT), 43-44 (GT), 45-46 (GT), 47-48 (GT), 49-50 (GT), 51-52 (GT), 53-54 (GT), 55-56 (GT), 57-58 (GT), 59-60 (GT), and 61-62 (GN). The tract at residues 30–62 (GTGGTGTGTGTGTGTGTGTGTGTGTGTGTGTGN) is 16 X 2 AA tandem repeats of G-[TN]. Over residues 30–62 (GTGGTGTGTGTGTGTGTGTGTGTGTGTGTGTGN) the composition is skewed to gly residues. Positions 79 to 88 (VTLTESLLNK) are enriched in polar residues.

As to quaternary structure, forms a heterodimer with timeless (TIM); the complex then translocates into the nucleus. Phosphorylated with a circadian rhythmicity, probably by the double-time protein (dbt). Phosphorylation could be implicated in the stability of per monomer and in the formation of heterodimer per-tim.

The protein resides in the nucleus. Its subcellular location is the cytoplasm. It is found in the perinuclear region. Its function is as follows. Essential for biological clock functions. Determines the period length of circadian and ultradian rhythms; an increase in PER dosage leads to shortened circadian rhythms and a decrease leads to lengthened circadian rhythms. Essential for the circadian rhythmicity of locomotor activity, eclosion behavior, and for the rhythmic component of the male courtship song that originates in the thoracic nervous system. The biological cycle depends on the rhythmic formation and nuclear localization of the TIM-PER complex. Light induces the degradation of TIM, which promotes elimination of PER. Nuclear activity of the heterodimer coordinatively regulates PER and TIM transcription through a negative feedback loop. Behaves as a negative element in circadian transcriptional loop. Does not appear to bind DNA, suggesting indirect transcriptional inhibition. This Drosophila teissieri (Fruit fly) protein is Period circadian protein (per).